The sequence spans 46 residues: Major urinary protein (46 aa).

A glycan (N-linked (GlcNAc...) asparagine) is linked at asparagine 15.

It belongs to the calycin superfamily. Lipocalin family. As to expression, found in many tissues including liver, urine, preputial gland, clitoral gland, submandibular gland and salivary gland.

The protein localises to the secreted. Functionally, binds pheromones that are released from drying urine of males. These pheromones affect the sexual behavior of females. Acts as a shuttle for pheromonal communication between individuals of the same species. In Rattus rattus (Black rat), this protein is Major urinary protein.